The chain runs to 295 residues: Diaminopimelate epimerase (295 aa).

Residues Asn-13, Gln-46, and Asn-66 each contribute to the substrate site. Catalysis depends on Cys-75, which acts as the Proton donor. Substrate is bound by residues 76 to 77 (GN), Asn-162, Asn-195, and 213 to 214 (ER). Cys-222 serves as the catalytic Proton acceptor. Residue 223-224 (GT) participates in substrate binding.

This sequence belongs to the diaminopimelate epimerase family. As to quaternary structure, homodimer.

The protein resides in the cytoplasm. The enzyme catalyses (2S,6S)-2,6-diaminopimelate = meso-2,6-diaminopimelate. The protein operates within amino-acid biosynthesis; L-lysine biosynthesis via DAP pathway; DL-2,6-diaminopimelate from LL-2,6-diaminopimelate: step 1/1. Its function is as follows. Catalyzes the stereoinversion of LL-2,6-diaminopimelate (L,L-DAP) to meso-diaminopimelate (meso-DAP), a precursor of L-lysine and an essential component of the bacterial peptidoglycan. The sequence is that of Diaminopimelate epimerase from Psychrobacter arcticus (strain DSM 17307 / VKM B-2377 / 273-4).